Here is a 451-residue protein sequence, read N- to C-terminus: Epi-neemfruitin B 7-O-acetyltransferse L7AT (451 aa).

Residues H165 and D384 each act as proton acceptor in the active site.

This sequence belongs to the plant acyltransferase family. As to quaternary structure, monomer. As to expression, mainly expressed in petioles and, to a lower extent, in roots.

It catalyses the reaction epi-neemfruitin B + acetyl-CoA = 7-acetyl-epi-neemfruitin B + CoA. It functions in the pathway secondary metabolite biosynthesis; terpenoid biosynthesis. Acetyltransferase involved in the biosynthesis of limonoids triterpene natural products such as azadirachtin, an antifeedant widely used as bioinsecticide, and possessing many medicinal applications including anti-tumoral, anti-malarial, anti-rheumatic, antibacterial, anti-inflammatory, anti-pyretic and diuretic effects. Catalyzes the formation of 7-acetyl-epi-neemfruitin B from epi-neemfruitin B. The sequence is that of Epi-neemfruitin B 7-O-acetyltransferse L7AT from Melia azedarach (Chinaberry tree).